Consider the following 290-residue polypeptide: Polyamine aminopropyltransferase (290 aa).

Positions 5–238 (QLWYEKLHSS…GIMTFAWASE (234 aa)) constitute a PABS domain. Position 33 (Gln-33) interacts with S-methyl-5'-thioadenosine. Residues His-64 and Asp-88 each coordinate spermidine. S-methyl-5'-thioadenosine contacts are provided by residues Glu-108 and 140 to 141 (DG). The active-site Proton acceptor is the Asp-158. 158–161 (DSTD) provides a ligand contact to spermidine. Residue Pro-165 participates in S-methyl-5'-thioadenosine binding.

Belongs to the spermidine/spermine synthase family. Homodimer or homotetramer.

Its subcellular location is the cytoplasm. The enzyme catalyses S-adenosyl 3-(methylsulfanyl)propylamine + putrescine = S-methyl-5'-thioadenosine + spermidine + H(+). The protein operates within amine and polyamine biosynthesis; spermidine biosynthesis; spermidine from putrescine: step 1/1. In terms of biological role, catalyzes the irreversible transfer of a propylamine group from the amino donor S-adenosylmethioninamine (decarboxy-AdoMet) to putrescine (1,4-diaminobutane) to yield spermidine. The polypeptide is Polyamine aminopropyltransferase (Hamiltonella defensa subsp. Acyrthosiphon pisum (strain 5AT)).